We begin with the raw amino-acid sequence, 249 residues long: Triosephosphate isomerase (249 aa).

Residue 9–11 coordinates substrate; the sequence is NWK. Histidine 94 functions as the Electrophile in the catalytic mechanism. The active-site Proton acceptor is glutamate 166. Substrate is bound by residues glycine 172 and 232–233; that span reads GG.

This sequence belongs to the triosephosphate isomerase family. In terms of assembly, homodimer.

It localises to the cytoplasm. It catalyses the reaction D-glyceraldehyde 3-phosphate = dihydroxyacetone phosphate. It functions in the pathway carbohydrate biosynthesis; gluconeogenesis. Its pathway is carbohydrate degradation; glycolysis; D-glyceraldehyde 3-phosphate from glycerone phosphate: step 1/1. In terms of biological role, involved in the gluconeogenesis. Catalyzes stereospecifically the conversion of dihydroxyacetone phosphate (DHAP) to D-glyceraldehyde-3-phosphate (G3P). The protein is Triosephosphate isomerase of Xylella fastidiosa (strain 9a5c).